Reading from the N-terminus, the 1357-residue chain is Ubiquitin carboxyl-terminal hydrolase 19 (1357 aa).

Disordered regions lie at residues 1–52 (MSAG…PTKD), 162–239 (LSPI…SDSA), and 275–296 (VSPR…EKDD). The Cytoplasmic portion of the chain corresponds to 1 to 1330 (MSAGTSATGP…TTSDEGCLRY (1330 aa)). Basic and acidic residues-rich tracts occupy residues 28-52 (DRAN…PTKD) and 171-182 (SEPRRAKQEARN). The 90-residue stretch at 51–140 (KDELLLDWRQ…VPLLTWPSLL (90 aa)) folds into the CS 1 domain. Residues 194–206 (SGASPGAQAGPSA) show a composition bias toward low complexity. Residues Ser221 and Ser283 each carry the phosphoserine modification. One can recognise a CS 2 domain in the interval 321–423 (LAFVKNDSYE…RQSQRWGGLE (103 aa)). Residues 432 to 479 (AKVAVPTGPTPLDSTPPGGGPLPLTGQEEARAVEKEKPKARSEDSGLD) are disordered. The segment covering 437-457 (PTGPTPLDSTPPGGGPLPLTG) has biased composition (low complexity). Basic and acidic residues predominate over residues 459–475 (EEARAVEKEKPKARSED). The USP domain maps to 536–1253 (TGLVNLGNTC…YAYVLFYRRR (718 aa)). Catalysis depends on Cys545, which acts as the Nucleophile. 8 residues coordinate Zn(2+): Cys830, Cys833, Cys847, Cys850, Cys856, Cys860, His868, and Cys872. The MYND-type zinc-finger motif lies at 830-872 (CAACQRKQQSEDEKLKRCTRCYRVGYCNQFCQKTHWPDHKGLC). Residues 962-981 (DTGAHRMWPPADRGPVPSTS) form a disordered region. His1204 (proton acceptor) is an active-site residue. Over residues 1259 to 1271 (RPPRAAHAEHHPD) the composition is skewed to basic and acidic residues. Disordered stretches follow at residues 1259-1278 (RPPR…AAEA) and 1292-1320 (AEEE…PRGP). Residues 1331-1351 (FVLGTVAALVALVLNVFYPLV) form a helical membrane-spanning segment. The Lumenal portion of the chain corresponds to 1352 to 1357 (SQSRWR).

As to quaternary structure, interacts with RNF123. Interacts with BIRC2/c-IAP1, BIRC3/c-IAP2 and XIAP/BIRC4. Interacts with HIF1A (via N-terminus). As to expression, expressed in testis, heart, kidney and skeletal muscle. Low levels of expression are detectable in all other tissues screened.

It is found in the endoplasmic reticulum membrane. The enzyme catalyses Thiol-dependent hydrolysis of ester, thioester, amide, peptide and isopeptide bonds formed by the C-terminal Gly of ubiquitin (a 76-residue protein attached to proteins as an intracellular targeting signal).. Functionally, deubiquitinating enzyme that regulates the degradation of various proteins by removing ubiquitin moieties, thereby preventing their proteasomal degradation. Stabilizes RNF123, which promotes CDKN1B degradation and contributes to cell proliferation. Decreases the levels of ubiquitinated proteins during skeletal muscle formation and acts to repress myogenesis. Modulates transcription of major myofibrillar proteins. Also involved in turnover of endoplasmic-reticulum-associated degradation (ERAD) substrates. Mechanistically, deubiquitinates and thereby stabilizes several E3 ligases involved in the ERAD pathway including SYVN1 or MARCHF6. Regulates the stability of other E3 ligases including BIRC2/c-IAP1 and BIRC3/c-IAP2 by preventing their ubiquitination. Required for cells to mount an appropriate response to hypoxia by rescuing HIF1A from degradation in a non-catalytic manner and by mediating the deubiquitination of FUNDC1. Attenuates mitochondrial damage and ferroptosis by targeting and stabilizing NADPH oxidase 4/NOX4. Negatively regulates TNF-alpha- and IL-1beta-triggered NF-kappa-B activation by hydrolyzing 'Lys-27'- and 'Lys-63'-linked polyubiquitin chains from MAP3K7. Modulates also the protein level and aggregation of polyQ-expanded huntingtin/HTT through HSP90AA1. The polypeptide is Ubiquitin carboxyl-terminal hydrolase 19 (Usp19) (Rattus norvegicus (Rat)).